Here is a 741-residue protein sequence, read N- to C-terminus: HSP-interacting protein (741 aa).

TPR repeat units lie at residues Ser-26 to Gly-59, Ala-65 to Tyr-100, and Arg-102 to Asn-134. The segment at Ala-168–Ala-270 is disordered. Basic and acidic residues predominate over residues Lys-171–Asp-184. Residues Ser-201 to Asn-218 show a composition bias toward polar residues. Over residues His-219 to Lys-247 the composition is skewed to basic and acidic residues. Positions Lys-248–Pro-258 are enriched in basic residues. The region spanning Met-285 to Val-364 is the PB1 domain. TPR repeat units follow at residues Glu-496–Phe-530, Glu-532–Ile-557, Asn-558–Gly-591, and Ser-628–Lys-663.

As to quaternary structure, interacts (via C-terminus) with O1. Interacts (via C-terminus) with OP10 (via N-terminus).

In terms of biological role, acts as a co-chaperone for HSP90 and is required for proper folding of the myosin motor domain. In Zea mays (Maize), this protein is HSP-interacting protein.